Here is a 632-residue protein sequence, read N- to C-terminus: Putative ankyrin repeat protein L767 (632 aa).

ANK repeat units follow at residues 61–97, 228–250, 251–282, 345–374, and 517–546; these read YGNTFMTNRIIKNTKYSLLDVNTVQMLLDYGDPDYEF, FDNEKLFYTVLYDSFELTKYIVE, KGFYYDFDSVINSDINLEMLKFFIELGNNLTD, NLDILMKTSILRENINMIKKCIEYGINVDD, and NSIELLFVVVLSENIDLFKLLLEINCNDTD.

This is Putative ankyrin repeat protein L767 from Acanthamoeba polyphaga mimivirus (APMV).